A 161-amino-acid polypeptide reads, in one-letter code: Regulator of ribonuclease activity A (161 aa).

This sequence belongs to the RraA family. As to quaternary structure, homotrimer. Binds to both RNA-binding sites in the C-terminal region of Rne and to RhlB.

The protein localises to the cytoplasm. Its function is as follows. Globally modulates RNA abundance by binding to RNase E (Rne) and regulating its endonucleolytic activity. Can modulate Rne action in a substrate-dependent manner by altering the composition of the degradosome. Modulates RNA-binding and helicase activities of the degradosome. This Citrobacter koseri (strain ATCC BAA-895 / CDC 4225-83 / SGSC4696) protein is Regulator of ribonuclease activity A.